The following is a 95-amino-acid chain: MANQSSTGSAGRFGARYGRVSRRRVSDIEGTMNEDHACPDCGSEAVSREGTGIWQCGKCGYKYAGGAYQPQTPSGKTVTRSIRTALGETGDSNSE.

The C4-type zinc-finger motif lies at Cys-38–Cys-59.

It belongs to the eukaryotic ribosomal protein eL43 family. It depends on Zn(2+) as a cofactor.

This chain is Large ribosomal subunit protein eL43, found in Halobacterium salinarum (strain ATCC 29341 / DSM 671 / R1).